Consider the following 1410-residue polypeptide: DNA-directed RNA polymerase subunit beta' (1410 aa).

The Zn(2+) site is built by Cys-70, Cys-72, Cys-85, and Cys-88. Residues Asp-460, Asp-462, and Asp-464 each coordinate Mg(2+). Positions 814, 888, 895, and 898 each coordinate Zn(2+).

Belongs to the RNA polymerase beta' chain family. The RNAP catalytic core consists of 2 alpha, 1 beta, 1 beta' and 1 omega subunit. When a sigma factor is associated with the core the holoenzyme is formed, which can initiate transcription. Mg(2+) is required as a cofactor. Zn(2+) serves as cofactor.

It catalyses the reaction RNA(n) + a ribonucleoside 5'-triphosphate = RNA(n+1) + diphosphate. In terms of biological role, DNA-dependent RNA polymerase catalyzes the transcription of DNA into RNA using the four ribonucleoside triphosphates as substrates. In Shewanella denitrificans (strain OS217 / ATCC BAA-1090 / DSM 15013), this protein is DNA-directed RNA polymerase subunit beta'.